A 401-amino-acid chain; its full sequence is cAMP-dependent protein kinase type II-alpha regulatory subunit (401 aa).

Ser2 carries the N-acetylserine modification. The dimerization and phosphorylation stretch occupies residues Ser2–Leu135. The segment at Ala43 to Ala65 is disordered. Residues Arg46 to Ser58 are compositionally biased toward low complexity. A phosphoserine mark is found at Ser48, Ser75, and Ser77. Position 96 is a phosphoserine; by PKA (Ser96). 3',5'-cyclic AMP is bound by residues Leu136–Pro257, Glu205, Arg214, Leu258–Gln401, Glu335, and Arg344. Position 212 is a phosphothreonine; by PDPK1 (Thr212). Residues Ser347 and Ser392 each carry the phosphoserine modification.

Belongs to the cAMP-dependent kinase regulatory chain family. The inactive form of the enzyme is composed of two regulatory chains and two catalytic chains. Activation by cAMP produces two active catalytic monomers and a regulatory dimer that binds four cAMP molecules. Interacts with AKAP4 and CBFA2T3. Interacts with the phosphorylated form of PJA2. Interacts with MYRIP; this interaction may link PKA to components of the exocytosis machinery, thus facilitating exocytosis, including insulin release. Forms a complex composed of PRKAR2A, GSK3B and GSKIP through GSKIP interaction; facilitates PKA-induced phosphorylation and regulates GSK3B activity. Interacts with ADCY8; inhibits adenylate cyclase activity through PKA phosphorylation. A second phosphorylation site has not been located. Post-translationally, phosphorylation of Thr-212 by PDPK1 seems to attenuate the activity of PKA, perhaps by strengthening interaction between the regulatory and the catalytic subunits. As to expression, four types of regulatory chains are found: I-alpha, I-beta, II-alpha, and II-beta. Their expression varies among tissues and is in some cases constitutive and in others inducible.

Its subcellular location is the cytoplasm. It is found in the cell membrane. Regulatory subunit of the cAMP-dependent protein kinases involved in cAMP signaling in cells. Type II regulatory chains mediate membrane association by binding to anchoring proteins, including the MAP2 kinase. This Bos taurus (Bovine) protein is cAMP-dependent protein kinase type II-alpha regulatory subunit (PRKAR2A).